Reading from the N-terminus, the 261-residue chain is Type III pantothenate kinase (261 aa).

Position 7 to 14 (E7 to M14) interacts with ATP. Substrate is bound at residue G108–R111. Catalysis depends on D110, which acts as the Proton acceptor. D130 lines the K(+) pocket. T133 is a binding site for ATP. T187 is a binding site for substrate.

It belongs to the type III pantothenate kinase family. As to quaternary structure, homodimer. Requires NH4(+) as cofactor. It depends on K(+) as a cofactor.

The protein localises to the cytoplasm. It catalyses the reaction (R)-pantothenate + ATP = (R)-4'-phosphopantothenate + ADP + H(+). Its pathway is cofactor biosynthesis; coenzyme A biosynthesis; CoA from (R)-pantothenate: step 1/5. Its function is as follows. Catalyzes the phosphorylation of pantothenate (Pan), the first step in CoA biosynthesis. This chain is Type III pantothenate kinase, found in Caulobacter vibrioides (strain ATCC 19089 / CIP 103742 / CB 15) (Caulobacter crescentus).